Reading from the N-terminus, the 759-residue chain is RNA-binding protein 28 (759 aa).

Alanine 2 bears the N-acetylalanine mark. In terms of domain architecture, RRM 1 spans 4-80 (LTLFVGRLPP…CKINVTVAKK (77 aa)). The disordered stretch occupies residues 84–105 (NKTKEKGKNENSECPKKEPKAK). Residues 85–101 (KTKEKGKNENSECPKKE) are compositionally biased toward basic and acidic residues. An RRM 2 domain is found at 114 to 191 (ARLIIRNLSF…RTVAVDWAVA (78 aa)). Residue serine 122 is modified to Phosphoserine. The disordered stretch occupies residues 201 to 330 (VSAIGEEKSH…NKKKRKLPSD (130 aa)). The span at 205–224 (GEEKSHESKHQESVKKKGRE) shows a compositional bias: basic and acidic residues. Composition is skewed to acidic residues over residues 225-256 (EEDM…EEEN) and 284-313 (SEED…EEQE). RRM domains follow at residues 335-419 (KTVF…LAVT) and 487-597 (TRLC…RSLQ). Serine 397 is modified (phosphoserine). A disordered region spans residues 594–759 (RSLQKMRSKP…LAKRSKWFDS (166 aa)). Positions 615–640 (PAKDQQQKAAQHHTEEQSKVPPEQKR) are enriched in basic and acidic residues. Lysine 653 participates in a covalent cross-link: Glycyl lysine isopeptide (Lys-Gly) (interchain with G-Cter in SUMO2). The span at 689–698 (VKPVHPKKPK) shows a compositional bias: basic residues. Residues 700–715 (QINQWKQEKQQLSSEQ) are compositionally biased toward polar residues.

As to quaternary structure, interacts with U1, U2, U4, U5, and U6 spliceosomal small nuclear RNAs (snRNAs). As to expression, ubiquitously expressed.

It is found in the nucleus. Its subcellular location is the nucleolus. Its function is as follows. Nucleolar component of the spliceosomal ribonucleoprotein complexes. The protein is RNA-binding protein 28 (RBM28) of Homo sapiens (Human).